Here is a 555-residue protein sequence, read N- to C-terminus: MDKRHDPSRRIIAPHGTQLSCKSWLTEAPMRMLMNNLHPDVAERPEDLVVYGGIGRAARDWDCYDKIIEVLQRLEDDETLLVQSGKPVGVFRTHADAPRVLIANSNLVPHWANWEHFNELDKLGLAMYGQMTAGSWIYIGTQGIVQGTYETFVSVAKQHFEGISKGKWILTGGLGGMGGAQTLAGTMAGFSVLACEVDETRIDFRLRTRYVDKKATSLDEALAMIEAANQAGKPVSVGLLANAADVFAELVKRGVTPDVVTDQTSAHDPLNGYLPQGWTMAEAAAMRKTDEAGVVKAAKASMAVQVQAMLDLQTAGAATLDYGNNIRQMAFEMGVENAFDFPGFVPAYIRPLFCEGIGPFRWVALSGDPEDIYKTDAKVKELIPDNPHLHNWLDMARERIAFQGLPARICWVGLKDRARLALAFNEMVKNGELSAPVVIGRDHLDSGSVASPNRETESMLDGSDAVSDWPLLNALLNTASGATWVSLHHGGGVGMGFSQHSGVVIVCDGTDAAAKRVGRVLWNDPATGVMRHADAGYEIAKNCAKEQGLDLPMQE.

NAD(+)-binding positions include 52-53 (GG), glutamine 130, 176-178 (GMG), glutamate 196, arginine 201, 242-243 (NA), 263-267 (QTSAH), 273-274 (YL), and tyrosine 322. The active site involves cysteine 410. Glycine 492 lines the NAD(+) pocket.

It belongs to the urocanase family. NAD(+) serves as cofactor.

It is found in the cytoplasm. The enzyme catalyses 4-imidazolone-5-propanoate = trans-urocanate + H2O. The protein operates within amino-acid degradation; L-histidine degradation into L-glutamate; N-formimidoyl-L-glutamate from L-histidine: step 2/3. Catalyzes the conversion of urocanate to 4-imidazolone-5-propionate. This chain is Urocanate hydratase, found in Shewanella baltica (strain OS185).